The primary structure comprises 494 residues: Syntaphilin (494 aa).

Residues 1 to 75 are disordered; it reads MAMSLPGSRR…GIKPPTPEQY (75 aa). Residues 7 to 49 are compositionally biased toward low complexity; it reads GSRRTSAGSRRRTSPPVSVRDAYGTSSLSSSSNSGSYKGSDSS. Residues 79 to 161 are a coiled coil; that stretch reads LQQKEVCIRH…VKNNLIDKDK (83 aa). Disordered stretches follow at residues 191 to 246 and 338 to 398; these read MAKE…SGFA and CGTD…GQSV. Phosphoserine occurs at positions 200 and 204. A compositionally biased stretch (polar residues) spans 207–217; sequence RSLTRSSTYTK. Phosphothreonine is present on threonine 214. A Phosphoserine modification is found at serine 219. Over residues 230–246 the composition is skewed to low complexity; the sequence is GDPSSGSAEDGADSGFA. Residues 344-353 show a composition bias toward basic and acidic residues; sequence SGDRCPELDA. Residues 425–444 form a helical membrane-spanning segment; sequence YIVDLLAVVVPAVPTVAWLC.

As to quaternary structure, binds to STX1A. Interacts with DNM1; this interaction inhibits the binding of DNM1 to AMPH and DNM1-receptor-mediated endocytosis. Brain specific. Found in synapses.

Its subcellular location is the membrane. It localises to the synapse. The protein resides in the synaptosome. In terms of biological role, inhibits SNARE complex formation by absorbing free STX1A. The chain is Syntaphilin from Homo sapiens (Human).